A 718-amino-acid polypeptide reads, in one-letter code: MRIDYTERMPQSYKMHSSMCLELKRLVDRIMRIFPDIEDARPGCSSGIQTLCLLHNALDKTKQLLQYCSESSKLYMAVTGDAILARGSRAKKSLEQCLNDIRSIVPTILEIKISQIVQDLRSTQLTLEFSEEEAGKAIRELMQKSTSSSASPDEIKDFHYAALKLQLSTPEAIVTERRSLKIICEDHKQNSFTHHQSIDDSLHANAAEAEASEEHNGTLPEKFKCTLSRTVMYDPVIISSGNTFERMQIQKWFDEGNDSCPISKRKLDDFTLKPNVELKSQISEWCAKNGLDVQDPARKHVKASNSIDFSVSIASFGSSLYNIPDHSGISITDFNSSYSIDSSSYSKMSKGGYFTPMQRIDSASGAGDTDSSHSEIEIDPLCGLTNLPWDAQIKVVEDVRSRFEHSTRAFRSMSPSKFLEPLITYLKNALERNGTAGEIIKGGLDLLLAFLSGNRRAIESLEEEVFKMFSVFLESEVVAEEALNILEVLSNHPHGPSKITSSGSLSSLLKIVESQAEHLQEQAMITLKNLSSSMEICLEMVSLDFIQKLTSFLQQKVFCKHSIIILKNLCSTEKGRGCITETPDCLASIAELLESNVPEEQENAISILLQLCVQKIEYCCLVVREATDIYSSLILISNNGTEEVKVSASELLRALVEVDSDKEEEEEVSSRPEGRTTASPTSQVVTPVTHPEPVKITPSPKKSGLFGFNFSSLKKKKK.

One can recognise a U-box domain in the interval 218-292 (TLPEKFKCTL…SEWCAKNGLD (75 aa)). ARM repeat units follow at residues 493–532 (PHGP…NLSS), 534–571 (MEIC…NLCS), and 573–613 (EKGR…QLCV). The tract at residues 662–704 (KEEEEEVSSRPEGRTTASPTSQVVTPVTHPEPVKITPSPKKSG) is disordered. Residues 676-686 (TTASPTSQVVT) are compositionally biased toward polar residues.

The enzyme catalyses S-ubiquitinyl-[E2 ubiquitin-conjugating enzyme]-L-cysteine + [acceptor protein]-L-lysine = [E2 ubiquitin-conjugating enzyme]-L-cysteine + N(6)-ubiquitinyl-[acceptor protein]-L-lysine.. The protein operates within protein modification; protein ubiquitination. Functionally, functions as an E3 ubiquitin ligase. The sequence is that of U-box domain-containing protein 5 (PUB5) from Arabidopsis thaliana (Mouse-ear cress).